Reading from the N-terminus, the 201-residue chain is Recombination protein RecR (201 aa).

The C4-type zinc finger occupies 60-75 (CKKCFNLTSEDECEIC). Residues 83–177 (KLICVVAETK…KVTRIAYGLP (95 aa)) form the Toprim domain.

It belongs to the RecR family.

Functionally, may play a role in DNA repair. It seems to be involved in an RecBC-independent recombinational process of DNA repair. It may act with RecF and RecO. The protein is Recombination protein RecR of Prochlorococcus marinus (strain MIT 9215).